Consider the following 158-residue polypeptide: Transcription factor BTF3 homolog 4 (158 aa).

An NAC-A/B domain is found at 33–98 (TADDKKLQSS…AEVKQITEML (66 aa)). Residues 123–158 (QVLDSKASKPEDIEEEDDDVPELVGNFDEASKNEAN) are disordered. Over residues 134–143 (DIEEEDDDVP) the composition is skewed to acidic residues.

It belongs to the NAC-beta family.

The sequence is that of Transcription factor BTF3 homolog 4 (btf3l4) from Xenopus laevis (African clawed frog).